Consider the following 160-residue polypeptide: SKP1-like protein 1A (160 aa).

The interval 102 to 160 (ILAANYLNIKNLLDLTCQTVADMIKGKTPEEIRTTFNIKNDFTPEEEEEVRRENQWAFE) is interaction with the F-box domain of F-box proteins.

The protein belongs to the SKP1 family. As to quaternary structure, part of a SCF E3 ubiquitin ligase complex composed of SKP1, CUL1, RBX1 (RBX1A or RBX1B) and F-box proteins. Interacts with SKIP1, SKIP2, SKIP3, SKIP4, SKIP6, FIB1/SKIP7, SKIP8, PP2A11/SKIP10, SKIP11, PP2B11/SKIP12, PP2A14/SKIP13, SKIP14, SKIP15, SKIP16, SKIP19/FBL20, SKIP20, PP2B1/SKIP21, SKIP22, SKIP23, SKIP24, SKIP25, TULP10/SKIP26, SKIP27, SKIP28/MEE11, AFR/SKIP29, SKIP30, SKIP31, SKIP32/FBP7, SKIP33, SKIP35, ADO1/ZTL, ADO2/LKP2, ADO3/FKF1, AFR, COI1, DOR, EBF1, EBF2, EID1, ORE9, PP2A13/SKIP9, TIR1, UFO, SKP2A, CPR1/CPR30, FBL17, NUP58, At1g55000, At1g67340, At1g78100, At3g04660, At3g61590, At4g38940 and At5g49610. The SKP1A subunit of the SCF E3 ubiquitin ligase complex can interact directly with KIN10, KIN11 and the proteasome subunit PAD1. This interaction can be disrupted by PRL1. In case of polerovirus infection, part of a SCF P0 complex composed of the viral silencing suppressor P0, SKP1 and CUL1. Interacts with turnip yellows virus P0. Interacts with VBF and Agrobacterium virF. Binds to KIB1. Accumulates only in meristematic cells. Expressed in inflorescence, shoot and root apical meristems, as well as in developing organs such as gametocytes and seeds. Also detected in cortical layer and epidermis of roots, leaves, pith and vascular bundle of young stem, young floral buds and organ primordia, pollen and through the valve of siliques. Not detectable in mature root tissues.

It is found in the nucleus. The protein resides in the cytoplasm. Its subcellular location is the cytoskeleton. The protein localises to the spindle. It localises to the phragmoplast. Its pathway is protein modification; protein ubiquitination. Its function is as follows. Involved in ubiquitination and subsequent proteasomal degradation of target proteins. Together with CUL1, RBX1 and a F-box protein, it forms a SCF E3 ubiquitin ligase complex. The functional specificity of this complex depends on the type of F-box protein. In the SCF complex, it serves as an adapter that links the F-box protein to CUL1. SCF(UFO) is required for vegetative and floral organ development as well as for male gametogenesis. SCF(TIR1) is involved in auxin signaling pathway. SCF(COI1) regulates responses to jasmonates. SCF(EID1) and SCF(AFR) are implicated in phytochrome A light signaling. SCF(ADO1), SCF(ADO2), SCF(ADO3) are related to the circadian clock. SCF(ORE9) seems to be involved in senescence. SCF(EBF1/EBF2) may regulate ethylene signaling. Plays a role during embryogenesis and early postembryonic development, especially during cell elongation and division. Contributes to the correct chromosome segregation during tetrad formation. In Arabidopsis thaliana (Mouse-ear cress), this protein is SKP1-like protein 1A.